A 1402-amino-acid chain; its full sequence is DNA-directed RNA polymerase subunit beta' (1402 aa).

Zn(2+) is bound by residues Cys73, Cys75, Cys88, and Cys91. Residues Asp464, Asp466, and Asp468 each coordinate Mg(2+). Cys812, Cys886, Cys893, and Cys896 together coordinate Zn(2+).

This sequence belongs to the RNA polymerase beta' chain family. As to quaternary structure, the RNAP catalytic core consists of 2 alpha, 1 beta, 1 beta' and 1 omega subunit. When a sigma factor is associated with the core the holoenzyme is formed, which can initiate transcription. It depends on Mg(2+) as a cofactor. Zn(2+) is required as a cofactor.

It catalyses the reaction RNA(n) + a ribonucleoside 5'-triphosphate = RNA(n+1) + diphosphate. DNA-dependent RNA polymerase catalyzes the transcription of DNA into RNA using the four ribonucleoside triphosphates as substrates. The polypeptide is DNA-directed RNA polymerase subunit beta' (Rhodopseudomonas palustris (strain ATCC BAA-98 / CGA009)).